A 310-amino-acid polypeptide reads, in one-letter code: Ribosomal RNA small subunit methyltransferase H (310 aa).

S-adenosyl-L-methionine contacts are provided by residues 47–49 (GGH), Asp-66, Phe-93, Asp-108, and Gln-115.

The protein belongs to the methyltransferase superfamily. RsmH family.

The protein resides in the cytoplasm. The enzyme catalyses cytidine(1402) in 16S rRNA + S-adenosyl-L-methionine = N(4)-methylcytidine(1402) in 16S rRNA + S-adenosyl-L-homocysteine + H(+). Functionally, specifically methylates the N4 position of cytidine in position 1402 (C1402) of 16S rRNA. The protein is Ribosomal RNA small subunit methyltransferase H of Prochlorococcus marinus (strain MIT 9303).